The chain runs to 1395 residues: uncharacterized protein (1395 aa).

89-96 (AYKKWGKS) provides a ligand contact to ATP. 2 disordered regions span residues 146–166 (EEKI…LSPP) and 205–391 (SSSS…MENR). Low complexity-rich tracts occupy residues 155–166 (GSPSPEAELSPP) and 205–222 (SSSS…TSSP). Residues 230–269 (EVTKERSSEVPTTVHEKTQSKSKNEKENKFSNGTIEEKPA) show a composition bias toward basic and acidic residues. The span at 287-301 (SWSSGSSEAGSSSSG) shows a compositional bias: low complexity. Residues 313–328 (VKVRHKAREIRNKKGR) show a composition bias toward basic residues. A compositionally biased stretch (basic and acidic residues) spans 337 to 346 (KHGEKAERNI). Positions 349–358 (GSSSSSSSGS) are enriched in low complexity. The segment covering 369–391 (PLKEIGRKDPGSTEGKDLYMENR) has biased composition (basic and acidic residues). Ser814 and Ser1080 each carry phosphoserine. The interval 1110 to 1132 (PISASELSPGGGSESEFESEKDE) is disordered. 2 positions are modified to phosphoserine: Ser1194 and Ser1338. Residues 1346-1359 (TGERDSGAKSDGFR) show a composition bias toward basic and acidic residues. A disordered region spans residues 1346–1395 (TGERDSGAKSDGFRGKMCSSASSTSEETGSEGGGEWVGPSEEELFSRTHL).

This is an uncharacterized protein from Homo sapiens (Human).